A 1040-amino-acid polypeptide reads, in one-letter code: Probable starch synthase 4, chloroplastic/amyloplastic (1040 aa).

The transit peptide at methionine 1–serine 42 directs the protein to the chloroplast. Residues cysteine 43–glutamate 142 form a disordered region. Composition is skewed to basic and acidic residues over residues aspartate 52 to lysine 61 and asparagine 112 to isoleucine 124. Residues glutamate 187 to glutamate 466 adopt a coiled-coil conformation. Positions 556, 559, and 562 each coordinate ADP. Residues tryptophan 679 and glutamine 680 each coordinate (1,4-alpha-D-glucosyl)n. Residues arginine 849, lysine 854, lysine 906, aspartate 908, tyrosine 916, leucine 933, and threonine 934 each contribute to the ADP site.

This sequence belongs to the glycosyltransferase 1 family. Bacterial/plant glycogen synthase subfamily. Interacts with PTST2. Interacts with PII1; the interaction is essential for the initiation of starch granules biosynthesis in leaf chloroplasts. In terms of tissue distribution, expressed in leaves and flowers.

The protein resides in the plastid. The protein localises to the chloroplast. It localises to the amyloplast. It is found in the chloroplast stroma. It catalyses the reaction [(1-&gt;4)-alpha-D-glucosyl](n) + ADP-alpha-D-glucose = [(1-&gt;4)-alpha-D-glucosyl](n+1) + ADP + H(+). Its pathway is glycan biosynthesis; starch biosynthesis. In terms of biological role, probably involved in the priming of starch granule formation. May play a regulatory role in the control of starch accumulation in plastids. Is necessary and sufficient to establish the correct number of starch granules observed in chloroplasts. The chain is Probable starch synthase 4, chloroplastic/amyloplastic from Arabidopsis thaliana (Mouse-ear cress).